The sequence spans 134 residues: Large ribosomal subunit protein uL16c (134 aa).

The protein belongs to the universal ribosomal protein uL16 family. As to quaternary structure, part of the 50S ribosomal subunit.

It localises to the plastid. It is found in the chloroplast. The chain is Large ribosomal subunit protein uL16c from Pinus thunbergii (Japanese black pine).